The sequence spans 155 residues: Small ribosomal subunit protein uS7cz/uS7cy (155 aa).

Belongs to the universal ribosomal protein uS7 family. As to quaternary structure, part of the 30S ribosomal subunit.

The protein resides in the plastid. The protein localises to the chloroplast. Its function is as follows. One of the primary rRNA binding proteins, it binds directly to 16S rRNA where it nucleates assembly of the head domain of the 30S subunit. The polypeptide is Small ribosomal subunit protein uS7cz/uS7cy (rps7-A) (Oenothera argillicola (Appalachian evening primrose)).